A 104-amino-acid polypeptide reads, in one-letter code: uncharacterized protein (104 aa).

A helical transmembrane segment spans residues 72–92 (LIFSHNIVIIVSPIYMISFII).

It localises to the membrane. This is an uncharacterized protein from Saccharomyces cerevisiae (strain ATCC 204508 / S288c) (Baker's yeast).